Here is a 1024-residue protein sequence, read N- to C-terminus: Multidrug resistance protein MdtC (1024 aa).

A run of 12 helical transmembrane segments spans residues 3 to 23 (FLSL…ALVL), 333 to 353 (EVEQ…FAFL), 360 to 380 (LIPA…MYLC), 387 to 407 (LSLM…IVVL), 431 to 451 (VGFT…PLLM), 463 to 483 (FAIT…TLTP), 528 to 548 (WALL…ISMP), 853 to 873 (LWLI…LYES), 875 to 895 (VHPL…LLAL), 897 to 917 (LFNT…IGIV), 953 to 973 (PIIM…LSSG), and 984 to 1004 (ITIV…TPVV).

This sequence belongs to the resistance-nodulation-cell division (RND) (TC 2.A.6) family. MdtC subfamily. Part of a tripartite efflux system composed of MdtA, MdtB and MdtC. MdtC forms a heteromultimer with MdtB.

The protein localises to the cell inner membrane. The sequence is that of Multidrug resistance protein MdtC from Erwinia amylovora (strain ATCC 49946 / CCPPB 0273 / Ea273 / 27-3).